Here is a 400-residue protein sequence, read N- to C-terminus: Hyaluronidase (400 aa).

An N-terminal signal peptide occupies residues 1-19 (MQTILVLTTFLSAWFLAVG). Cystine bridges form between cysteine 31-cysteine 319, cysteine 196-cysteine 209, cysteine 344-cysteine 355, cysteine 349-cysteine 384, and cysteine 386-cysteine 395. Residue glutamate 120 is the Proton donor of the active site. Residues asparagine 129 and asparagine 166 are each glycosylated (N-linked (GlcNAc...) asparagine). Residues asparagine 243 and asparagine 275 are each glycosylated (N-linked (GlcNAc...) asparagine). In terms of domain architecture, EGF-like spans 340–396 (NVARCSKQACSGRGRCTWPKDTSVIAWKFLVEKEDYDFYLGDIECKCVEGYEGRYCE).

It belongs to the glycosyl hydrolase 56 family. In terms of assembly, monomer. As to expression, expressed by the venom gland.

The protein localises to the secreted. It catalyses the reaction Random hydrolysis of (1-&gt;4)-linkages between N-acetyl-beta-D-glucosamine and D-glucuronate residues in hyaluronate.. Spider venom endo-hyaluronidase that is able to degrade purified hyaluronic acid (HA) and chondroitin sulfate (CS). Has no activity on dermatan sulfate (DS) and heparan sulfate (HS). Also increases the dermonecrotic effect of the dermonecrotic toxin (AC P0CE80), when injected in rabbit skin, supporting the hypothesis that venom hyaluronidases are spreading factors. In Loxosceles intermedia (Brown spider), this protein is Hyaluronidase.